We begin with the raw amino-acid sequence, 306 residues long: Homeobox protein Hox-C13a (306 aa).

Positions 68–90 (SVYSDISSPDTGRQCPAPQTSSS) are disordered. A DNA-binding region (homeobox) is located at residues 236-295 (GRKKRVPYTKLQLKELEKEYAASKFITKDKRRRISAATNLSERQVTIWFQNRRVKEKKFI).

Belongs to the Abd-B homeobox family.

Its subcellular location is the nucleus. Functionally, sequence-specific transcription factor which is part of a developmental regulatory system that provides cells with specific positional identities on the anterior-posterior axis. In Takifugu rubripes (Japanese pufferfish), this protein is Homeobox protein Hox-C13a (hoxc13a).